Reading from the N-terminus, the 60-residue chain is Large ribosomal subunit protein uL30 (60 aa).

The protein belongs to the universal ribosomal protein uL30 family. Part of the 50S ribosomal subunit.

The sequence is that of Large ribosomal subunit protein uL30 from Leuconostoc mesenteroides subsp. mesenteroides (strain ATCC 8293 / DSM 20343 / BCRC 11652 / CCM 1803 / JCM 6124 / NCDO 523 / NBRC 100496 / NCIMB 8023 / NCTC 12954 / NRRL B-1118 / 37Y).